Here is a 213-residue protein sequence, read N- to C-terminus: Kynurenine formamidase (213 aa).

Trp18 provides a ligand contact to substrate. Residues His48, His52, and Asp54 each coordinate Zn(2+). Residue His58 is the Proton donor/acceptor of the active site. His160 and Glu172 together coordinate Zn(2+).

The protein belongs to the Cyclase 1 superfamily. KynB family. In terms of assembly, homodimer. Requires Zn(2+) as cofactor.

It carries out the reaction N-formyl-L-kynurenine + H2O = L-kynurenine + formate + H(+). It participates in amino-acid degradation; L-tryptophan degradation via kynurenine pathway; L-kynurenine from L-tryptophan: step 2/2. Catalyzes the hydrolysis of N-formyl-L-kynurenine to L-kynurenine, the second step in the kynurenine pathway of tryptophan degradation. The chain is Kynurenine formamidase from Burkholderia pseudomallei (strain 1106a).